Reading from the N-terminus, the 760-residue chain is Xaa-Pro dipeptidyl-peptidase (760 aa).

Catalysis depends on charge relay system residues Ser-349, Asp-469, and His-499.

This sequence belongs to the peptidase S15 family. As to quaternary structure, homodimer.

It is found in the cytoplasm. The catalysed reaction is Hydrolyzes Xaa-Pro-|- bonds to release unblocked, N-terminal dipeptides from substrates including Ala-Pro-|-p-nitroanilide and (sequentially) Tyr-Pro-|-Phe-Pro-|-Gly-Pro-|-Ile.. Its function is as follows. Removes N-terminal dipeptides sequentially from polypeptides having unsubstituted N-termini provided that the penultimate residue is proline. The chain is Xaa-Pro dipeptidyl-peptidase from Streptococcus pyogenes serotype M2 (strain MGAS10270).